Consider the following 174-residue polypeptide: NADH-ubiquinone oxidoreductase chain 6 (174 aa).

The next 5 membrane-spanning stretches (helical) occupy residues 1–21 (MTYV…GFSS), 24–44 (SPIY…AIIL), 47–67 (GGGY…MVVF), 86–106 (VEVL…VLWV), and 151–171 (WLVV…IEIA).

It belongs to the complex I subunit 6 family. Core subunit of respiratory chain NADH dehydrogenase (Complex I) which is composed of 45 different subunits.

Its subcellular location is the mitochondrion inner membrane. The enzyme catalyses a ubiquinone + NADH + 5 H(+)(in) = a ubiquinol + NAD(+) + 4 H(+)(out). In terms of biological role, core subunit of the mitochondrial membrane respiratory chain NADH dehydrogenase (Complex I) which catalyzes electron transfer from NADH through the respiratory chain, using ubiquinone as an electron acceptor. Essential for the catalytic activity and assembly of complex I. This is NADH-ubiquinone oxidoreductase chain 6 (MT-ND6) from Gorilla gorilla gorilla (Western lowland gorilla).